Reading from the N-terminus, the 288-residue chain is Small ribosomal subunit protein uS2 (288 aa).

A compositionally biased stretch (low complexity) spans 259–276 (EAAPAAEEAPAAEAEAAA). Residues 259–288 (EAAPAAEEAPAAEAEAAATDTSSESDKTEA) form a disordered region.

This sequence belongs to the universal ribosomal protein uS2 family.

The chain is Small ribosomal subunit protein uS2 from Maricaulis maris (strain MCS10) (Caulobacter maris).